The following is a 479-amino-acid chain: ATP synthase subunit beta (479 aa).

162 to 169 (GGAGVGKT) is a binding site for ATP.

Belongs to the ATPase alpha/beta chains family. In terms of assembly, F-type ATPases have 2 components, CF(1) - the catalytic core - and CF(0) - the membrane proton channel. CF(1) has five subunits: alpha(3), beta(3), gamma(1), delta(1), epsilon(1). CF(0) has three main subunits: a(1), b(2) and c(9-12). The alpha and beta chains form an alternating ring which encloses part of the gamma chain. CF(1) is attached to CF(0) by a central stalk formed by the gamma and epsilon chains, while a peripheral stalk is formed by the delta and b chains.

Its subcellular location is the cell membrane. It catalyses the reaction ATP + H2O + 4 H(+)(in) = ADP + phosphate + 5 H(+)(out). In terms of biological role, produces ATP from ADP in the presence of a proton gradient across the membrane. The catalytic sites are hosted primarily by the beta subunits. The protein is ATP synthase subunit beta of Mesoplasma florum (strain ATCC 33453 / NBRC 100688 / NCTC 11704 / L1) (Acholeplasma florum).